Reading from the N-terminus, the 763-residue chain is 5-methyltetrahydropteroyltriglutamate--homocysteine methyltransferase (763 aa).

Residues 16-19 (RELK) and K117 each bind 5-methyltetrahydropteroyltri-L-glutamate. L-homocysteine contacts are provided by residues 438-440 (IGS) and E491. Residues 438–440 (IGS) and E491 contribute to the L-methionine site. Residues 522-523 (RC) and W568 contribute to the 5-methyltetrahydropteroyltri-L-glutamate site. D606 provides a ligand contact to L-homocysteine. D606 serves as a coordination point for L-methionine. E612 contacts 5-methyltetrahydropteroyltri-L-glutamate. 3 residues coordinate Zn(2+): H648, C650, and E672. The active-site Proton donor is the H701. Zn(2+) is bound at residue C733.

The protein belongs to the vitamin-B12 independent methionine synthase family. It depends on Zn(2+) as a cofactor.

It catalyses the reaction 5-methyltetrahydropteroyltri-L-glutamate + L-homocysteine = tetrahydropteroyltri-L-glutamate + L-methionine. It functions in the pathway amino-acid biosynthesis; L-methionine biosynthesis via de novo pathway; L-methionine from L-homocysteine (MetE route): step 1/1. Functionally, catalyzes the transfer of a methyl group from 5-methyltetrahydrofolate to homocysteine resulting in methionine formation. The chain is 5-methyltetrahydropteroyltriglutamate--homocysteine methyltransferase from Pseudomonas paraeruginosa (strain DSM 24068 / PA7) (Pseudomonas aeruginosa (strain PA7)).